Consider the following 817-residue polypeptide: MKRLRNLSSSDSSDNESPSTSFSSCFQHKGKGKCTADDGKKSAEVFRKDLISAMKIPDSQHVNPEEYYQFADTWKQEWEKGVQVPSNPENIPQPSLRVIAEKAKEVLFTRPRKYIHCSSQEPAEPGYINILELAESMCRYDLDDLDLYWLGECNLELADMGCAPVDESTMEKTLEVLERQCHENMNHAIETEEGLGIEYDEDVICDVCRSPDSEEGNDMVFCDRCNICVHQACYGILKVPEGSWLCRTCVLGLHPQCILCPKTGGAMKATRTGTKWAHVSCALWIPEVSIACPERMEPITKVSHIPPSRWALVCSLCKLKTGACIQCSVKSCITAFHVTCAFEHSLEMKTILDEGDEVKFKSYCLKHSKNKHGLISEQEEPHKTHSDNRPTESERTSLRAQKLKELEEDFYTLVKVEDVAAELGLPMLTVDFIYSFWKLKRKSNFNKPLLTPKEDEQNGLVQPKEDSIHTRMRMFMHLRQDLERVRNLCYMVNRREKLKLSHSKMHEEIFNLQVQLVNQEVAAGQPLSNALENTLFYPPPRITLKLKMPKPRTRDCRISSVKAGTMSSPDNQNSSATYHGMGGEVHRQSSEHTKLYSTYASEQRNNGLLGGITRFHKEFQGTGCKPSSRFRSSGKPMSLQAVIHGQSSNGSGKVQHEHVSLARANGVLSSGDRTQRDSSSQTSPGQNSEIICHIAGQSTFRKANMEHFSRSFKEATNNLVRTTEDLRSSEKPQRRQSVKERLWSKQPADTQTSGTPYQDNDGYCPDLELSDSEAESDENKDHMLLRRNSRESPNRDSCRNSRIRGKRKMTSHSSVQR.

Positions 1–38 are disordered; that stretch reads MKRLRNLSSSDSSDNESPSTSFSSCFQHKGKGKCTADD. Over residues 8–24 the composition is skewed to low complexity; sequence SSSDSSDNESPSTSFSS. Residues 202 to 252 form a PHD-type 1 zinc finger; the sequence is DVICDVCRSPDSEEGNDMVFCDRCNICVHQACYGILKVPEGSWLCRTCVLG. The segment at 254–288 adopts a C2HC pre-PHD-type zinc-finger fold; it reads HPQCILCPKTGGAMKATRTGTKWAHVSCALWIPEV. The PHD-type 2 zinc-finger motif lies at 312–368; that stretch reads LVCSLCKLKTGACIQCSVKSCITAFHVTCAFEHSLEMKTILDEGDEVKFKSYCLKHS. Disordered regions lie at residues 375-396, 665-689, and 719-817; these read ISEQEEPHKTHSDNRPTESERT, NGVLSSGDRTQRDSSSQTSPGQNSE, and LVRT…SVQR. Positions 379–396 are enriched in basic and acidic residues; the sequence is EEPHKTHSDNRPTESERT. Residues 667-689 are compositionally biased toward polar residues; sequence VLSSGDRTQRDSSSQTSPGQNSE. Positions 722–743 are enriched in basic and acidic residues; the sequence is TTEDLRSSEKPQRRQSVKERLW. Polar residues predominate over residues 747–758; the sequence is PADTQTSGTPYQ. Basic and acidic residues predominate over residues 777-799; sequence DENKDHMLLRRNSRESPNRDSCR. Basic residues predominate over residues 801 to 810; it reads SRIRGKRKMT.

Belongs to the JADE family. In terms of assembly, component of the HBO1 complex.

In terms of biological role, scaffold subunit of some HBO1 complexes, which have a histone H4 acetyltransferase activity. The chain is Protein Jade-3 (jade3) from Xenopus tropicalis (Western clawed frog).